The primary structure comprises 317 residues: Aspartate carbamoyltransferase catalytic subunit (317 aa).

Residues arginine 64 and threonine 65 each coordinate carbamoyl phosphate. Lysine 92 is a binding site for L-aspartate. The carbamoyl phosphate site is built by arginine 114, histidine 144, and glutamine 147. Arginine 177 and arginine 232 together coordinate L-aspartate. The carbamoyl phosphate site is built by glycine 273 and proline 274.

This sequence belongs to the aspartate/ornithine carbamoyltransferase superfamily. ATCase family. As to quaternary structure, heterododecamer (2C3:3R2) of six catalytic PyrB chains organized as two trimers (C3), and six regulatory PyrI chains organized as three dimers (R2).

It catalyses the reaction carbamoyl phosphate + L-aspartate = N-carbamoyl-L-aspartate + phosphate + H(+). The protein operates within pyrimidine metabolism; UMP biosynthesis via de novo pathway; (S)-dihydroorotate from bicarbonate: step 2/3. In terms of biological role, catalyzes the condensation of carbamoyl phosphate and aspartate to form carbamoyl aspartate and inorganic phosphate, the committed step in the de novo pyrimidine nucleotide biosynthesis pathway. The protein is Aspartate carbamoyltransferase catalytic subunit of Thiobacillus denitrificans (strain ATCC 25259 / T1).